The sequence spans 256 residues: Small ribosomal subunit protein eS1 (256 aa).

The segment covering 1–18 (MAVGKNKRLSKGKKGLKK) has biased composition (basic residues). Residues 1–20 (MAVGKNKRLSKGKKGLKKKA) are disordered. An N-acetylalanine; partial modification is found at Ala2.

Belongs to the eukaryotic ribosomal protein eS1 family. Component of the small ribosomal subunit. Mature ribosomes consist of a small (40S) and a large (60S) subunit. The 40S subunit contains about 33 different proteins and 1 molecule of RNA (18S). The 60S subunit contains about 49 different proteins and 3 molecules of RNA (25S, 5.8S and 5S).

The protein resides in the cytoplasm. This chain is Small ribosomal subunit protein eS1, found in Chaetomium globosum (strain ATCC 6205 / CBS 148.51 / DSM 1962 / NBRC 6347 / NRRL 1970) (Soil fungus).